Consider the following 1296-residue polypeptide: MEILRGSPALSAFRITKLLSRCQDAHLPVSDIYAEYVHFADVSAPLSADEHARLQRLLQYGPSLPEHPPAGRLLLVTPRPGTISPWSSKATDIAHNCGLSQILRLERGLAFSIQGPNLNEGQWKQLAALLHDRMMETVFTDLQQAEQLFSHHQPAPVQRVDILGQGRSALEQANIKLGLALAQDEIDYLLTAFTGLGRNPTDIELYMFAQANSEHCRHKIFNADWVIDGVAQPKTLFKMIKNTFEHTPDYVLSAYKDNAAVMEGSQVGRFYATAEKGIYDYHQEEAHILMKVETHNHPTAISPWPGAATGSGGEIRDEGATGRGAKPKAGLVGFSVSNLRIPGFEQPWEENFGKPDRIVTALDIMTEGPLGGAAFNNEFGRPALLGYFRTYEERVNSHNGIELRGYHKPIMLAGGLGNIRADHVQKGEITVGAKLVVLGGPSMNIGLGGGAASSMASGQSDADLDFASVQRDNPEMERRCQEVIDRCWQLGEYNPILFIHDVGAGGLSNAMPELVNDGGRGGRFELRDILNDEPGMSPLEVWCNESQERYVLAVAPAQMALFDEICRRERAPYAVIGEATEEKHLLLNDRHFGNQPIDMPLDVLLGKTPKMLRDVTRLQAKGDALQRADISLAEAVKRIMHLPAVAEKTFLITIGDRTVTGMVTRDQMVGPWQIPVADCAVTSASLDSYYGEAMSLGERAPVALLDFAASARLAVGEALTNIAATQIGELKRIKLSANWMSAAGHPGEDAGLYDAVRAVGEELCPALEITIPVGKDSMSMKTRWQEGHEQREMTSPLSLVITAFARIEDVRRTVTPQLRTDKGDNALLLIDLGAGHNALGATALTQVYRQLGDKPADVRNVQQLAGFFNAMQRLVADQHLLAYHDRSDGGLLVTLAEMAFAGHCGVTVDIQSLGNDALAALFNEELGAVIQVRAEQRADVEKLLADHGLANCVHYLGRAVAGDTFDIRSGTDVVYSEKRSTLRLWWAETSWQMQRLRDNPDCADQEHQAKQDESDPGLNVKLTFDPAEDIAAPFILKQARPKVAVLREQGVNSHVEMAAAFHRAGFDAVDVHMSDLLAGRTDLQSFQTLVACGGFSYGDVLGAGEGWAKSILFNDRVRDEFEAFFHRPTTLALGVCNGCQMMSNLRELIPGAEHWPRFVRNLSDSFEARFSLVEVASSPSLFMQDMVGSRMPIAVSHGEGQVEVRDAAHLAALEQSHLVALRFVNNHGVVTEQYPANPNGSANGITAVTSVSGRATVMMPHPERVFRTVSNSWHPEEWGEDSPWMRMFRNARKQLG.

The tract at residues 304–323 (WPGAATGSGGEIRDEGATGR) is disordered. Residues 306–317 (GAATGSGGEIRD) and A677 contribute to the ATP site. Positions 678, 717, 721, and 885 each coordinate Mg(2+). S887 lines the ATP pocket. The segment covering 1000-1013 (PDCADQEHQAKQDE) has biased composition (basic and acidic residues). The tract at residues 1000–1019 (PDCADQEHQAKQDESDPGLN) is disordered. The Glutamine amidotransferase type-1 domain occupies 1043-1296 (VAVLREQGVN…MFRNARKQLG (254 aa)). C1136 serves as the catalytic Nucleophile. Active-site residues include H1261 and E1263.

The protein in the N-terminal section; belongs to the FGAMS family. As to quaternary structure, monomer.

Its subcellular location is the cytoplasm. It catalyses the reaction N(2)-formyl-N(1)-(5-phospho-beta-D-ribosyl)glycinamide + L-glutamine + ATP + H2O = 2-formamido-N(1)-(5-O-phospho-beta-D-ribosyl)acetamidine + L-glutamate + ADP + phosphate + H(+). Its pathway is purine metabolism; IMP biosynthesis via de novo pathway; 5-amino-1-(5-phospho-D-ribosyl)imidazole from N(2)-formyl-N(1)-(5-phospho-D-ribosyl)glycinamide: step 1/2. Functionally, phosphoribosylformylglycinamidine synthase involved in the purines biosynthetic pathway. Catalyzes the ATP-dependent conversion of formylglycinamide ribonucleotide (FGAR) and glutamine to yield formylglycinamidine ribonucleotide (FGAM) and glutamate. The sequence is that of Phosphoribosylformylglycinamidine synthase from Yersinia pseudotuberculosis serotype I (strain IP32953).